The sequence spans 629 residues: Probable indole-3-acetic acid-amido synthetase GH3.4 (629 aa).

Belongs to the IAA-amido conjugating enzyme family. As to expression, expressed in flowers.

Its function is as follows. May catalyze the synthesis of indole-3-acetic acid (IAA)-amino acid conjugates, providing a mechanism for the plant to cope with the presence of excess auxin. The polypeptide is Probable indole-3-acetic acid-amido synthetase GH3.4 (GH3.4) (Oryza sativa subsp. japonica (Rice)).